The following is a 357-amino-acid chain: Glucose 1-dehydrogenase (357 aa).

Asp38 lines the Zn(2+) pocket. Positions 40 and 49 each coordinate substrate. Residues His63 and Glu64 each contribute to the Zn(2+) site. Substrate is bound by residues Glu114 and Glu150. Zn(2+) is bound at residue Glu150. Residues 181–184 (NGSL), 207–208 (RR), Ser228, 272–274 (LGV), and 301–303 (SVN) each bind NADP(+). Asn303 is a binding site for substrate.

This sequence belongs to the zinc-containing alcohol dehydrogenase family. Glucose 1-dehydrogenase subfamily. In terms of assembly, homodimer. Zn(2+) serves as cofactor.

The catalysed reaction is D-glucose + NAD(+) = D-glucono-1,5-lactone + NADH + H(+). The enzyme catalyses D-glucose + NADP(+) = D-glucono-1,5-lactone + NADPH + H(+). Its activity is regulated as follows. Activated by molar concentrations of KCl or NaCl. Inhibited by EDTA in vitro. In terms of biological role, catalyzes the NAD(P)(+)-dependent oxidation of D-glucose to D-gluconate. Displays broad substrate specificity since it is able to catalyze the oxidation of a number of alternative aldose sugars, such as D-xylose, D-galactose, and D-fucose, to the corresponding glyconate. Can utilize both NAD(+) and NADP(+) as electron acceptor, with a preference for NADP(+). Physiologically, seems to be involved in the degradation of glucose through a modified Entner-Doudoroff pathway. The chain is Glucose 1-dehydrogenase from Haloferax mediterranei (strain ATCC 33500 / DSM 1411 / JCM 8866 / NBRC 14739 / NCIMB 2177 / R-4) (Halobacterium mediterranei).